The primary structure comprises 105 residues: Thioredoxin (105 aa).

Residues 2–105 (VKQIESKYAF…KLEATINELI (104 aa)) form the Thioredoxin domain. At lysine 3 the chain carries N6-acetyllysine. N6-succinyllysine is present on lysine 8. Residues cysteine 32 and cysteine 35 each act as nucleophile in the active site. A disulfide bond links cysteine 32 and cysteine 35. N6-acetyllysine is present on lysine 39. An S-nitrosocysteine mark is found at cysteine 62 and cysteine 69. Position 73 is an S-nitrosocysteine; alternate (cysteine 73). Lysine 94 bears the N6-acetyllysine; alternate mark. Residue lysine 94 is modified to N6-succinyllysine; alternate.

The protein belongs to the thioredoxin family. Homodimer; disulfide-linked. Interacts with TXNIP through the redox-active site. Interacts with MAP3K5 and CASP3. Interacts with APEX1; the interaction stimulates the FOS/JUN AP-1 DNA-binding activity in a redox-dependent manner. Post-translationally, in the fully reduced protein, both Cys-69 and Cys-73 are nitrosylated in response to nitric oxide (NO). When two disulfide bonds are present in the protein, only Cys-73 is nitrosylated. Cys-73 can serve as donor for nitrosylation of target proteins.

The protein localises to the nucleus. It localises to the cytoplasm. It is found in the secreted. Its function is as follows. Participates in various redox reactions through the reversible oxidation of its active center dithiol to a disulfide and catalyzes dithiol-disulfide exchange reactions. Plays a role in the reversible S-nitrosylation of cysteine residues in target proteins, and thereby contributes to the response to intracellular nitric oxide. Nitrosylates the active site Cys of CASP3 in response to nitric oxide (NO), and thereby inhibits caspase-3 activity. Induces the FOS/JUN AP-1 DNA binding activity in ionizing radiation (IR) cells through its oxidation/reduction status and stimulates AP-1 transcriptional activity. The chain is Thioredoxin (TXN) from Bos taurus (Bovine).